Consider the following 628-residue polypeptide: MSDKSDLKAELERKKQRLAQIREEKKRKEEERKKKEADMQQKKEPVQDDSDLDRKRRETEALLQSIGISPEPPLVPTPMSPSSKSVSTPSDAGSQDSGDLGPLTRTLQWDTDPSVLQLQSDSELGRRLHKLGVSKVTQVDFLPREVVSYSKETQTPLATHQSEEDEEDEEMVEPKIGHDSELENQEKKQETKEAPPRELTEEEKQQILHSEEFLIFFDRTIRVIERALAEDSDIFFDYSGRELEEKDGDVQAGANLSFNRQFYDEHWSKHRVVTCMDWSLQYPELMVASYSNNEDAPHEPDGVALVWNMKFKKTTPEYVFHCQSSVMSVCFARFHPNLVVGGTYSGQIVLWDNRSHRRTPVQRTPLSAAAHTHPVYCVNVVGTQNAHNLITVSTDGKMCSWSLDMLSTPQESMELVYNKSKPVAVTGMAFPTGDVNNFVVGSEEGTVYTACRHGSKAGIGEVFEGHQGPVTGINCHMAVGPIDFSHLFVTSSFDWTVKLWTTKHNKPLYSFEDNADYVYDVMWSPVHPALFACVDGMGRLDLWNLNSDTEVPTASVAIEGASALNRVRWAQGGKEVAVGDSEGRIWIYDVGELAVPHNDEWTRFARTLVEIRANRADSEEEGAVELAA.

Basic and acidic residues-rich tracts occupy residues 1-13 (MSDKSDLKAELER) and 20-60 (QIRE…RETE). Residues 1–114 (MSDKSDLKAE…RTLQWDTDPS (114 aa)) form a disordered region. Ser2 carries the N-acetylserine modification. Residue Ser50 is modified to Phosphoserine. Positions 70–79 (PEPPLVPTPM) are enriched in pro residues. The span at 80 to 90 (SPSSKSVSTPS) shows a compositional bias: low complexity. Ser83 carries the post-translational modification Phosphoserine. Thr88 is modified (phosphothreonine). 3 positions are modified to phosphoserine: Ser90, Ser94, and Ser97. Positions 105-114 (RTLQWDTDPS) are enriched in polar residues. Residues 130–146 (KLGVSKVTQVDFLPREV) form an interaction with DYNLT1 region. Positions 152–204 (ETQTPLATHQSEEDEEDEEMVEPKIGHDSELENQEKKQETKEAPPRELTEEEK) are disordered. The residue at position 159 (Thr159) is a Phosphothreonine. Ser162 and Ser180 each carry phosphoserine. Over residues 172–204 (VEPKIGHDSELENQEKKQETKEAPPRELTEEEK) the composition is skewed to basic and acidic residues. WD repeat units lie at residues 268–317 (SKHR…TTPE), 321–361 (HCQS…RTPV), 370–411 (AHTH…TPQE), 420–460 (SKPV…AGIG), 465–510 (GHQG…PLYS), 513–553 (DNAD…EVPT), and 559–598 (EGASALNRVRWAQGGKEVAVGDSEGRIWIYDVGELAVPHN). Ser618 bears the Phosphoserine mark.

This sequence belongs to the dynein intermediate chain family. Homodimer. The cytoplasmic dynein 1 complex consists of two catalytic heavy chains (HCs) and a number of non-catalytic subunits presented by intermediate chains (ICs), light intermediate chains (LICs) and light chains (LCs); the composition seems to vary in respect to the IC, LIC and LC composition. The heavy chain homodimer serves as a scaffold for the probable homodimeric assembly of the respective non-catalytic subunits. The ICs and LICs bind directly to the HC dimer and the LCs assemble on the IC dimer. Interacts with DYNC1H1. Interacts with DYNLT1 and DYNLT3. Interacts with DCTN1. Interacts with DYNLL2. Interacts with MCRS1; the interaction is required for the proper distribution of centriolar satellites.

The protein resides in the cytoplasm. The protein localises to the chromosome. It localises to the centromere. Its subcellular location is the kinetochore. It is found in the cytoskeleton. The protein resides in the spindle pole. In terms of biological role, acts as one of several non-catalytic accessory components of the cytoplasmic dynein 1 complex that are thought to be involved in linking dynein to cargos and to adapter proteins that regulate dynein function. Cytoplasmic dynein 1 acts as a motor for the intracellular retrograde motility of vesicles and organelles along microtubules. The intermediate chains mediate the binding of dynein to dynactin via its 150 kDa component (p150-glued) DCTN1. May play a role in mediating the interaction of cytoplasmic dynein with membranous organelles and kinetochores. The sequence is that of Cytoplasmic dynein 1 intermediate chain 1 (Dync1i1) from Mus musculus (Mouse).